The sequence spans 645 residues: Translation factor GUF1 homolog, mitochondrial (645 aa).

The tr-type G domain occupies 40–215 (EKIRNFGIVA…AIVERVPAPT (176 aa)). GTP is bound by residues 49–56 (AHVDHGKS), 108–112 (DTPGH), and 162–165 (NKID).

This sequence belongs to the TRAFAC class translation factor GTPase superfamily. Classic translation factor GTPase family. LepA subfamily.

Its subcellular location is the mitochondrion inner membrane. It catalyses the reaction GTP + H2O = GDP + phosphate + H(+). Its function is as follows. Promotes mitochondrial protein synthesis. May act as a fidelity factor of the translation reaction, by catalyzing a one-codon backward translocation of tRNAs on improperly translocated ribosomes. Binds to mitochondrial ribosomes in a GTP-dependent manner. This Caenorhabditis briggsae protein is Translation factor GUF1 homolog, mitochondrial.